We begin with the raw amino-acid sequence, 370 residues long: Homoserine kinase (370 aa).

The transit peptide at Met-1 to Arg-34 directs the protein to the chloroplast. Leu-143 to Ala-154 serves as a coordination point for ATP.

Belongs to the GHMP kinase family. Homoserine kinase subfamily.

Its subcellular location is the plastid. It localises to the chloroplast stroma. It catalyses the reaction L-homoserine + ATP = O-phospho-L-homoserine + ADP + H(+). It functions in the pathway amino-acid biosynthesis; L-threonine biosynthesis; L-threonine from L-aspartate: step 4/5. Catalyzes the ATP-dependent phosphorylation of L-homoserine to L-homoserine phosphate. Is specific for L-homoserine and cannot use other substrates such D-serine, L-serine, D-threonine and L-threonine, galactose or D-homoserine in vitro. Required for susceptibility to the downy mildew pathogen Hyaloperonospora parasitica. The chain is Homoserine kinase (HSK) from Arabidopsis thaliana (Mouse-ear cress).